Here is a 611-residue protein sequence, read N- to C-terminus: Probable potassium transport system protein Kup (611 aa).

A run of 13 helical transmembrane segments spans residues 24–44 (LVFGDIGTSPIYTLAVLFLFL), 55–75 (VSLIFWTLLIMVTVQYTFLAM), 102–122 (VAVFTLLATLGISLMIGECVI), 143–163 (LIAQDWLIFLAILIALGLFLF), 175–195 (FGPVMVIWFLTLFISGAISVA), 218–238 (LLGFFSLSMIVLCATGAEALF), 252–272 (AWGFVFIAVFFSYLGQAAYLL), 275–295 (TDVINPLFEMIFSLSQILYIP), 296–316 (FLLLMIIATIIASQAVISGIF), 344–364 (IYINTVNWLLCIAVICVLLIF), 374–394 (YGLAVTGTMSITGSFMIAIFL), 400–420 (LYMGIALIVTLVDITYFLSTV), and 423–443 (ITHGGYLSLVIAAIPFTIVII).

This sequence belongs to the HAK/KUP transporter (TC 2.A.72) family.

Its subcellular location is the cell membrane. The enzyme catalyses K(+)(in) + H(+)(in) = K(+)(out) + H(+)(out). Functionally, transport of potassium into the cell. Likely operates as a K(+):H(+) symporter. The sequence is that of Probable potassium transport system protein Kup from Methanospirillum hungatei JF-1 (strain ATCC 27890 / DSM 864 / NBRC 100397 / JF-1).